The chain runs to 292 residues: Hydroxysqualene synthase (292 aa).

It belongs to the phytoene/squalene synthase family. HpnC subfamily.

It carries out the reaction presqualene diphosphate + H2O = hydroxysqualene + diphosphate. It participates in secondary metabolite biosynthesis; hopanoid biosynthesis. In terms of biological role, involved in the biosynthesis of the hopanoid precursor squalene (SQ) from farnesyl diphosphate (FPP). Catalyzes the second step, the conversion of presqualene diphosphate (PSPP) to hydroxysqualene (HSQ). In Sinorhizobium fredii (strain NBRC 101917 / NGR234), this protein is Hydroxysqualene synthase.